A 298-amino-acid chain; its full sequence is Anamorsin homolog (298 aa).

Positions 1-143 (MTQLIITHQS…IKAEKPSWKP (143 aa)) are N-terminal SAM-like domain. Residues 143-162 (PEEGKVLVDDIDLEGSVPDI) form a linker region. [2Fe-2S] cluster-binding residues include Cys175, Cys182, Cys185, and Cys187. The segment at 175-187 (CKSKERACNNCNC) is fe-S binding site A. Cys218, Cys221, Cys229, and Cys232 together coordinate [4Fe-4S] cluster. 2 consecutive short sequence motifs (cx2C motif) follow at residues 218 to 221 (CGNC) and 229 to 232 (CSGC). The interval 218-232 (CGNCYLGDAFRCSGC) is fe-S binding site B.

The protein belongs to the anamorsin family. As to quaternary structure, monomer. It depends on [2Fe-2S] cluster as a cofactor. Requires [4Fe-4S] cluster as cofactor.

Its subcellular location is the cytoplasm. The protein localises to the mitochondrion intermembrane space. Component of the cytosolic iron-sulfur (Fe-S) protein assembly (CIA) machinery. Required for the maturation of extramitochondrial Fe-S proteins. Part of an electron transfer chain functioning in an early step of cytosolic Fe-S biogenesis, facilitating the de novo assembly of a [4Fe-4S] cluster on the cytosolic Fe-S scaffold complex. Electrons are transferred from NADPH via a FAD- and FMN-containing diflavin oxidoreductase. Together with the diflavin oxidoreductase, also required for the assembly of the diferric tyrosyl radical cofactor of ribonucleotide reductase (RNR), probably by providing electrons for reduction during radical cofactor maturation in the catalytic small subunit. This Cryptosporidium parvum (strain Iowa II) protein is Anamorsin homolog.